The primary structure comprises 172 residues: Small ribosomal subunit protein bS6 (172 aa).

A disordered region spans residues 100–172 (LPAKRVVKTS…ENKEIEKKED (73 aa)). Positions 107–172 (KTSEKNVKED…ENKEIEKKED (66 aa)) are enriched in basic and acidic residues.

The protein belongs to the bacterial ribosomal protein bS6 family.

Functionally, binds together with bS18 to 16S ribosomal RNA. The polypeptide is Small ribosomal subunit protein bS6 (Prochlorococcus marinus (strain MIT 9211)).